An 88-amino-acid polypeptide reads, in one-letter code: MGDVLVTLKILPKDTDADIKSIEDQVKRNIEGLCSINRMDEVDIGFGLKYIKLEIIVQDKEGEIDRVENSISSIEGVGEISTENVSLI.

This sequence belongs to the EF-1-beta/EF-1-delta family.

Functionally, promotes the exchange of GDP for GTP in EF-1-alpha/GDP, thus allowing the regeneration of EF-1-alpha/GTP that could then be used to form the ternary complex EF-1-alpha/GTP/AAtRNA. This chain is Elongation factor 1-beta (ef1b), found in Thermoplasma acidophilum (strain ATCC 25905 / DSM 1728 / JCM 9062 / NBRC 15155 / AMRC-C165).